Reading from the N-terminus, the 137-residue chain is Small ribosomal subunit protein bS16m (137 aa).

Residues 1–34 (MVHLTTLLCKAYRGGHLTIRLALGGCTNRPFYRI) constitute a mitochondrion transit peptide. A Phosphothreonine modification is found at threonine 130.

It belongs to the bacterial ribosomal protein bS16 family. In terms of assembly, component of the mitochondrial ribosome small subunit (28S) which comprises a 12S rRNA and about 30 distinct proteins.

The protein resides in the mitochondrion. This Pongo abelii (Sumatran orangutan) protein is Small ribosomal subunit protein bS16m (MRPS16).